The sequence spans 595 residues: Probable inactive glycosyltransferase 25 family member 3 (595 aa).

Positions 1–24 (MRAAPAAPLLQLLLLLGPRPEAAG) are cleaved as a signal peptide. N-linked (GlcNAc...) asparagine glycans are attached at residues asparagine 75, asparagine 153, asparagine 237, and asparagine 360. Residues 576 to 595 (RLDLAGGSGHSLRPHPRDEL) are disordered. Residues 592–595 (RDEL) carry the Prevents secretion from ER motif.

It belongs to the glycosyltransferase 25 family.

Its subcellular location is the endoplasmic reticulum lumen. Functionally, probable cell adhesion protein involved in leukocyte transmigration across the blood-brain barrier. Does not express any beta-galactosyltransferase activity in vitro. The sequence is that of Probable inactive glycosyltransferase 25 family member 3 (CERCAM) from Bos taurus (Bovine).